The primary structure comprises 131 residues: Cystatin-like cysteine protease inhibitor EPIC3 (131 aa).

Residues 1-22 (MAFTRSIALFAGLALAASSAQG) form the signal peptide. N33 carries N-linked (GlcNAc...) asparagine glycosylation. The Secondary area of contact motif lies at 71-75 (QTVAG).

The protein belongs to the cystatin family.

It is found in the secreted. In terms of biological role, secreted effector that interacts with and inhibits host apoplastic pathogenesis-related papain-like cysteine proteases. Inhibition of host proteases by a pathogen extracellular protease inhibitor forms a specific type of defense-counterdefense mechanism between plants and microbial pathogens. This chain is Cystatin-like cysteine protease inhibitor EPIC3, found in Phytophthora infestans (strain T30-4) (Potato late blight agent).